The following is a 367-amino-acid chain: DNA replication and repair protein RecF (367 aa).

Residue 30–37 (GANGSGKT) coordinates ATP.

Belongs to the RecF family.

Its subcellular location is the cytoplasm. In terms of biological role, the RecF protein is involved in DNA metabolism; it is required for DNA replication and normal SOS inducibility. RecF binds preferentially to single-stranded, linear DNA. It also seems to bind ATP. The chain is DNA replication and repair protein RecF from Pseudomonas syringae pv. syringae (strain B728a).